We begin with the raw amino-acid sequence, 326 residues long: Immune-associated nucleotide-binding protein 4 (326 aa).

In terms of domain architecture, AIG1-type G spans 17-225 (EPIKNIVLVG…FTDEMHRKIQ (209 aa)). The tract at residues 26 to 33 (GRTGNGKS) is G1. Residues 26 to 34 (GRTGNGKSA) and Ser47 contribute to the GTP site. A G2 region spans residues 53 to 57 (GVTMK). Positions 75–78 (DTPG) are G3. The segment at 145–148 (TGGD) is G4. The tract at residues 184 to 186 (DNR) is G5. Asn185 lines the GTP pocket. A coiled-coil region spans residues 217 to 241 (TDEMHRKIQKEAETLREQQKEVESK).

Belongs to the TRAFAC class TrmE-Era-EngA-EngB-Septin-like GTPase superfamily. AIG1/Toc34/Toc159-like paraseptin GTPase family. IAN subfamily. Expressed in radicles of the germinating seeds.

This Arabidopsis thaliana (Mouse-ear cress) protein is Immune-associated nucleotide-binding protein 4.